Consider the following 1578-residue polypeptide: Bromodomain-containing protein DDB_G0270170 (1578 aa).

Residues 1–12 (MSLEQQDETVVE) show a composition bias toward acidic residues. Disordered stretches follow at residues 1 to 39 (MSLE…TYKE), 108 to 127 (NNNN…NNTE), 151 to 285 (HYSD…AKEL), and 319 to 454 (NENI…TTQT). Over residues 18 to 35 (SFETNNSTANNTNNNTDN) the composition is skewed to low complexity. Residues 152-163 (YSDDESSKEKQD) show a composition bias toward basic and acidic residues. 2 stretches are compositionally biased toward low complexity: residues 164–185 (NINS…SENI) and 197–231 (TTPS…TTTN). Composition is skewed to polar residues over residues 319–332 (NENI…STTK) and 340–351 (TASTTNTPIITA). The segment covering 352-383 (QQNTTPLSPTQTTTTTTTPTTTTAQQNTPAQT) has biased composition (low complexity). A compositionally biased stretch (polar residues) spans 384–395 (ESKPPTTISINI). Low complexity-rich tracts occupy residues 396–407 (KGSKSPKTTGGK) and 417–433 (VVIS…VATT). Polar residues predominate over residues 443-454 (STANNNSETTQT). A coiled-coil region spans residues 479–506 (SDSATIQQLQQSISMLEDKIRLISSNNK). Disordered stretches follow at residues 543 to 565 (FTKS…YSDD) and 580 to 730 (IPIP…RMGK). 2 stretches are compositionally biased toward low complexity: residues 604–653 (NTST…PPQQ) and 660–686 (TQQE…DTTT). One can recognise a Bromo domain in the interval 735–841 (VVLTPVFKRC…DVFEKGFPKV (107 aa)). Positions 851 to 903 (KNVDQEKIEKLSNDLKNVTKELEKFKKDDSNSINNNNNNNNNYNNNNNNNNNN) form a coiled coil. Disordered stretches follow at residues 874 to 969 (KFKK…KVTT), 1039 to 1167 (HALP…NNNN), 1184 to 1452 (SIPE…TDSA), and 1480 to 1544 (EREE…KGNM). 3 stretches are compositionally biased toward low complexity: residues 881–911 (NSIN…SSRS), 918–961 (SSGS…SSNN), and 1047–1061 (SSTH…DSSS). Positions 957–1039 (SSSNNKKYPK…QYKNGEIPQH (83 aa)) constitute an NET domain. Residues 1064 to 1077 (REIEKLQKQLDRLG) are compositionally biased toward basic and acidic residues. The span at 1092–1107 (HSKRISKPISKARGRK) shows a compositional bias: basic residues. Residues 1112–1167 (SSSNLNNSSNNINNNNNNINNYNNNNNYNNNNNNNLNNNNNNNINSNLNNNLNNNN) are compositionally biased toward low complexity. Positions 1113 to 1150 (SSNLNNSSNNINNNNNNINNYNNNNNYNNNNNNNLNNN) form a coiled coil. Residues 1192-1204 (TDISESSDSESDS) are compositionally biased toward acidic residues. Low complexity-rich tracts occupy residues 1205 to 1218 (ESGS…YSDS) and 1231 to 1334 (YNNS…SLTN). Positions 1280–1308 (NSNNNNSNNNNNNVNNNNNNHNNNNHNNN) form a coiled coil. Polar residues predominate over residues 1356–1369 (SVASWSFDPTNNKE). The segment covering 1370 to 1386 (SSSSSSTSSTSSTSNTT) has biased composition (low complexity). The segment covering 1387-1399 (LTPIIQQSSLTHA) has biased composition (polar residues). 2 stretches are compositionally biased toward low complexity: residues 1400 to 1424 (SSPI…NNLS) and 1432 to 1451 (NSPS…NTDS). A coiled-coil region spans residues 1462–1544 (TLKQKEKERV…EKLNNSKGNM (83 aa)). Positions 1480 to 1538 (EREEKEEELKKEEEKKRIEMEEIKRLAKEKEEREAEETRKQIESERAAAREAREKEKLN) are enriched in basic and acidic residues.

The sequence is that of Bromodomain-containing protein DDB_G0270170 from Dictyostelium discoideum (Social amoeba).